Consider the following 209-residue polypeptide: Putative 3-methyladenine DNA glycosylase (209 aa).

The protein belongs to the DNA glycosylase MPG family.

The chain is Putative 3-methyladenine DNA glycosylase from Lactiplantibacillus plantarum (strain ATCC BAA-793 / NCIMB 8826 / WCFS1) (Lactobacillus plantarum).